Reading from the N-terminus, the 86-residue chain is RNA-binding protein Hfq (86 aa).

One can recognise a Sm domain in the interval 9 to 68; it reads DPYLNTLRKEKVPVSIYLVNGIKLQGSIESFDQFVVLLKNTVSQMVYKHAISTVVPARPV. A disordered region spans residues 66-86; sequence RPVRLPSPTDSEHGDSEPGNA. The segment covering 75–86 has biased composition (basic and acidic residues); the sequence is DSEHGDSEPGNA.

This sequence belongs to the Hfq family. Homohexamer.

In terms of biological role, RNA chaperone that binds small regulatory RNA (sRNAs) and mRNAs to facilitate mRNA translational regulation in response to envelope stress, environmental stress and changes in metabolite concentrations. Also binds with high specificity to tRNAs. The sequence is that of RNA-binding protein Hfq from Pseudomonas putida (strain ATCC 700007 / DSM 6899 / JCM 31910 / BCRC 17059 / LMG 24140 / F1).